A 37-amino-acid chain; its full sequence is Cytochrome b6-f complex subunit 5 (37 aa).

The helical transmembrane segment at 5–25 (LLCGIVLGLIPITLAGLFMAA) threads the bilayer.

Belongs to the PetG family. The 4 large subunits of the cytochrome b6-f complex are cytochrome b6, subunit IV (17 kDa polypeptide, PetD), cytochrome f and the Rieske protein, while the 4 small subunits are PetG, PetL, PetM and PetN. The complex functions as a dimer.

The protein resides in the cellular thylakoid membrane. Its function is as follows. Component of the cytochrome b6-f complex, which mediates electron transfer between photosystem II (PSII) and photosystem I (PSI), cyclic electron flow around PSI, and state transitions. PetG is required for either the stability or assembly of the cytochrome b6-f complex. The polypeptide is Cytochrome b6-f complex subunit 5 (Synechococcus elongatus (strain ATCC 33912 / PCC 7942 / FACHB-805) (Anacystis nidulans R2)).